The chain runs to 63 residues: Sec-independent protein translocase protein TatA (63 aa).

The helical transmembrane segment at 1 to 21 threads the bilayer; the sequence is MGSFSMWHWLIVLVIVLLLFG. The segment at 42-63 is disordered; the sequence is GMTDEDAPDTAKTVDHKADETK. Positions 53–63 are enriched in basic and acidic residues; it reads KTVDHKADETK.

This sequence belongs to the TatA/E family. As to quaternary structure, the Tat system comprises two distinct complexes: a TatABC complex, containing multiple copies of TatA, TatB and TatC subunits, and a separate TatA complex, containing only TatA subunits. Substrates initially bind to the TatABC complex, which probably triggers association of the separate TatA complex to form the active translocon.

The protein resides in the cell inner membrane. In terms of biological role, part of the twin-arginine translocation (Tat) system that transports large folded proteins containing a characteristic twin-arginine motif in their signal peptide across membranes. TatA could form the protein-conducting channel of the Tat system. This is Sec-independent protein translocase protein TatA from Rhizobium leguminosarum bv. trifolii (strain WSM2304).